The primary structure comprises 880 residues: Translation initiation factor IF-2 (880 aa).

The interval 1-251 (MVDTKNPGDK…PTAKPAPAKQ (251 aa)) is disordered. Residues 58–79 (PADAPAAPAPVAAAKPAPVRAP) show a composition bias toward low complexity. A compositionally biased stretch (basic and acidic residues) spans 115 to 183 (ARIRDEEERK…KRFGEEEAKK (69 aa)). 2 stretches are compositionally biased toward low complexity: residues 184–215 (AAAA…VAAD) and 233–250 (AARP…APAK). A tr-type G domain is found at 376 to 547 (PRSPVVTVMG…ALQAELLDLK (172 aa)). A G1 region spans residues 385–392 (GHVDHGKT). 385 to 392 (GHVDHGKT) lines the GTP pocket. The tract at residues 410–414 (GITQH) is G2. Positions 433 to 436 (DTPG) are G3. GTP is bound by residues 433–437 (DTPGH) and 487–490 (NKID). Positions 487-490 (NKID) are G4. The segment at 523 to 525 (SAK) is G5.

This sequence belongs to the TRAFAC class translation factor GTPase superfamily. Classic translation factor GTPase family. IF-2 subfamily.

The protein resides in the cytoplasm. In terms of biological role, one of the essential components for the initiation of protein synthesis. Protects formylmethionyl-tRNA from spontaneous hydrolysis and promotes its binding to the 30S ribosomal subunits. Also involved in the hydrolysis of GTP during the formation of the 70S ribosomal complex. The protein is Translation initiation factor IF-2 of Rhodopseudomonas palustris (strain BisB18).